Reading from the N-terminus, the 363-residue chain is Anhydro-N-acetylmuramic acid kinase (363 aa).

Residue 10–17 (GTSLDGLD) coordinates ATP.

It belongs to the anhydro-N-acetylmuramic acid kinase family.

It catalyses the reaction 1,6-anhydro-N-acetyl-beta-muramate + ATP + H2O = N-acetyl-D-muramate 6-phosphate + ADP + H(+). It participates in amino-sugar metabolism; 1,6-anhydro-N-acetylmuramate degradation. Its pathway is cell wall biogenesis; peptidoglycan recycling. In terms of biological role, catalyzes the specific phosphorylation of 1,6-anhydro-N-acetylmuramic acid (anhMurNAc) with the simultaneous cleavage of the 1,6-anhydro ring, generating MurNAc-6-P. Is required for the utilization of anhMurNAc either imported from the medium or derived from its own cell wall murein, and thus plays a role in cell wall recycling. Contributes to intrinsic fosfomycin resistance in P.putida. The polypeptide is Anhydro-N-acetylmuramic acid kinase (Pseudomonas putida (strain ATCC 47054 / DSM 6125 / CFBP 8728 / NCIMB 11950 / KT2440)).